The chain runs to 928 residues: Echinoderm microtubule-associated protein-like 4 (928 aa).

The segment at 1 to 189 is microtubule-binding; it reads MDGFAGSLDD…IPSDVENYDD (189 aa). The stretch at 14–63 forms a coiled coil; sequence AASTSDVQDRLSALELRVQQQEDEITVLKAALADVLRRLAISEDQVATVR. The tract at residues 107–131 is disordered; it reads SAAKSVKRSSTIEKSHNSWDASEES. Basic and acidic residues predominate over residues 116 to 131; it reads STIEKSHNSWDASEES. WD repeat units follow at residues 199–237, 241–288, 296–336, 343–378, 385–424, 442–480, 485–521, 524–563, 567–604, 610–646, 653–692, 702–760, and 767–806; these read LKLE…LFNY, TQRH…VWDS, VIGL…VWDW, AEIK…FWTW, RKQG…IWSK, QISR…MWDH, EREI…LRGT, DGFQ…LWNS, SLEW…VLDA, VSIH…LYNV, YSRY…YWDI, RSDC…LFQY, and APSH…QWRL. The interval 821-928 is disordered; that stretch reads SSSAVNSPVV…ENQDDSSPLS (108 aa). A compositionally biased stretch (polar residues) spans 836-845; it reads QPNTPTNLPQ. Over residues 867-876 the composition is skewed to acidic residues; sequence DALEQPEELN. Positions 877–898 are enriched in polar residues; that stretch reads EVQSEKCSSQPEGANGQEPSNE.

Belongs to the WD repeat EMAP family. As to quaternary structure, homotrimer; self-association is mediated by the N-terminal coiled coil.

It is found in the cytoplasm. The protein resides in the cytoskeleton. Its subcellular location is the spindle. The protein localises to the microtubule organizing center. It localises to the midbody. In terms of biological role, essential for the formation and stability of microtubules (MTs). Required for the organization of the mitotic spindle and for the proper attachment of kinetochores to MTs. Promotes the recruitment of NUDC to the mitotic spindle for mitotic progression. The protein is Echinoderm microtubule-associated protein-like 4 (eml4) of Xenopus tropicalis (Western clawed frog).